A 941-amino-acid chain; its full sequence is Protein BREAST CANCER SUSCEPTIBILITY 1 homolog (941 aa).

Residues 16 to 54 form an RING-type zinc finger; it reads CPICLSLYNSAVSLSCNHVFCNACIVKSMKMDATCPVCK. Disordered regions lie at residues 87 to 282 and 303 to 528; these read FVSQ…ILPS and KVKV…GKDD. 2 stretches are compositionally biased toward basic and acidic residues: residues 96–115 and 125–136; these read SDKEKQVRDASVEKASDKNR and KRNEYGKTKEID. A compositionally biased stretch (polar residues) spans 157 to 173; the sequence is LLQNLSAESLTKPTESV. Residues 175 to 196 show a composition bias toward basic and acidic residues; sequence TAEKPKDYTENTVIRLDEHPSL. Positions 216-236 are enriched in polar residues; it reads NSSQRTESDQLLGTTPVNVPS. Residues 242-255 are compositionally biased toward basic and acidic residues; that stretch reads DSDHESPSKEDEQQ. The Nuclear localization signal 1 signature appears at 298 to 305; that stretch reads QKKLPKVK. Composition is skewed to polar residues over residues 329 to 357 and 376 to 391; these read GVSQEDNMESSAAATISEQQDSRGTSGTI and SKAQSTRVQSDLNVSN. Composition is skewed to basic and acidic residues over residues 428–453 and 477–487; these read GKGDQDQAHGPSDTHPEKRSPTEKPS and KTSEKKLKLDS. Residues 444-451 carry the Nuclear localization signal 2 motif; the sequence is EKRSPTEK. The segment covering 489-498 has biased composition (polar residues); it reads MISSKATQPH. Positions 512-528 are enriched in basic and acidic residues; that stretch reads DKQDSRNNRKSTVGKDD. A C2HC pre-PHD-type zinc finger spans residues 561–612; it reads KFTCAFCQCSEDTEASGEMTHYYRGEPVSADFNGGSKVIHVHKNCAEWAPNV. The PHD-type; degenerate zinc-finger motif lies at 632–681; sequence ISCSCCGLKGAALGCYNKSCKNSFHVTCAKLIPECRWDNVKFVMLCPLDA. BRCT domains are found at residues 724 to 819 and 840 to 941; these read KQFH…PYEI and KKPK…LVLI.

As to quaternary structure, forms heterodimer with BARD1/ROW1. In terms of tissue distribution, expressed ubiquitously with highest levels in flower buds. Mostly expressed in flowers and siliques, and, to a lower extent, in roots, rosette leaves, inflorescence and young cauline leaves.

The protein localises to the nucleus. Plays a role in DNA repair and in cell-cycle control. Required for the repair of DNA double-strand breaks (DSBs), both natural and induced by genotoxic stress, by homologous recombination (HR). The chain is Protein BREAST CANCER SUSCEPTIBILITY 1 homolog from Arabidopsis thaliana (Mouse-ear cress).